We begin with the raw amino-acid sequence, 166 residues long: Small ribosomal subunit protein uS5 (166 aa).

Residues 11–74 form the S5 DRBM domain; sequence LQEKLIAVNR…EKARRNMINV (64 aa).

Belongs to the universal ribosomal protein uS5 family. As to quaternary structure, part of the 30S ribosomal subunit. Contacts proteins S4 and S8.

Functionally, with S4 and S12 plays an important role in translational accuracy. In terms of biological role, located at the back of the 30S subunit body where it stabilizes the conformation of the head with respect to the body. This is Small ribosomal subunit protein uS5 from Mannheimia succiniciproducens (strain KCTC 0769BP / MBEL55E).